Consider the following 184-residue polypeptide: Peptide deformylase 2 (184 aa).

Cys-110 and His-153 together coordinate Fe cation. Glu-154 is a catalytic residue. Residue His-157 participates in Fe cation binding.

Belongs to the polypeptide deformylase family. Fe(2+) serves as cofactor.

It catalyses the reaction N-terminal N-formyl-L-methionyl-[peptide] + H2O = N-terminal L-methionyl-[peptide] + formate. In terms of biological role, removes the formyl group from the N-terminal Met of newly synthesized proteins. Requires at least a dipeptide for an efficient rate of reaction. N-terminal L-methionine is a prerequisite for activity but the enzyme has broad specificity at other positions. The sequence is that of Peptide deformylase 2 from Geobacillus stearothermophilus (Bacillus stearothermophilus).